A 378-amino-acid polypeptide reads, in one-letter code: MDGREAMAFPGSHSQFYLQRGVFTNLTPSQVASGLHAPPPPPGMRPMSNPNIHHPQASNPGPPFSMAEHRHSDFGHSIHMGMASPAAVQPTLQLPPPPSEQPMVKKKRGRPRKYVPDGQVSLGLSPMPCVSKKSKDSSSMSDPNAPKRARGRPPGTGRKQRLANLGEWMNTSAGLAFAPHVISVGSGEDIVSKVLSFSQKRPRALCIMSGTGTVSSVTLREPASTTPSLTFEGRFEILSLGGSYLVNEEGGSKSRTGGLSVSLSGPEGHVIGGGIGMLIAASLVQVVACSFVYGASAKSNNNNNKTIKQEIKPKQEPTNSEMETTPGSAPEAAASTGQHTPQNFPAQGMSGWPVSGSGSGRSLDSSRNPLTDIDLTRG.

3 disordered regions span residues 30–70, 88–160, and 302–378; these read QVAS…AEHR, VQPT…GRKQ, and NNNK…LTRG. Basic residues predominate over residues 104–113; it reads VKKKRGRPRK. The short motif at 105–113 is the Bipartite nuclear localization signal element; the sequence is KKKRGRPRK. DNA-binding regions (a.T hook) lie at residues 105–117 and 147–159; these read KKKRGRPRKYVPD and KRARGRPPGTGRK. Residues 171 to 314 form the PPC domain; sequence TSAGLAFAPH…KTIKQEIKPK (144 aa). Polar residues-rich tracts occupy residues 316–327 and 335–345; these read EPTNSEMETTPG and STGQHTPQNFP.

Interacts with AHL29.

It is found in the nucleus. Its function is as follows. Transcription factor that specifically binds AT-rich DNA sequences related to the nuclear matrix attachment regions (MARs). This is AT-hook motif nuclear-localized protein 5 from Arabidopsis thaliana (Mouse-ear cress).